Here is a 244-residue protein sequence, read N- to C-terminus: Protein TIFY 10b (244 aa).

The Tify domain occupies 97-132 (QEPEKRQLTIFYGGKVLVFNDFPADKAKGLMQLASK). A disordered region spans residues 174-244 (QKPARANASD…AVVKPIERGQ (71 aa)). Positions 185–210 (PIARKASLHRFLEKRKDRLNAKTPYQ) match the Jas motif. Positions 187–194 (ARKASLHR) match the Nuclear localization signal motif. Positions 194–204 (RFLEKRKDRLN) are enriched in basic and acidic residues.

This sequence belongs to the TIFY/JAZ family. Interacts with BHLH148. Interacts with COI1A and COI1B in a coronatine-dependent manner. Coronatine is an analog of jasmonoyl isoleucine (JA-Ile). Ubiquitinated. Targeted for degradation by the SCF(COI1) E3 ubiquitin ligase-proteasome pathway during jasmonate signaling.

The protein resides in the nucleus. Its function is as follows. Repressor of jasmonate responses. The chain is Protein TIFY 10b from Oryza sativa subsp. japonica (Rice).